We begin with the raw amino-acid sequence, 167 residues long: Phospholipase A and acyltransferase 1 (167 aa).

At 1–138 (MAVNDCFSLT…GEGVSEQANR (138 aa)) the chain is on the cytoplasmic side. Positions 20-135 (LIEVFRPCYQ…LRYGEGVSEQ (116 aa)) constitute an LRAT domain. His30 is an active-site residue. Residue Cys119 is the Acyl-thioester intermediate of the active site. A helical membrane pass occupies residues 139–159 (AIGTIGLVAAGIDIFTFLGLF). Over 160-167 (PKRQGAKS) the chain is Lumenal.

The protein belongs to the H-rev107 family.

It localises to the membrane. The protein localises to the cytoplasm. The protein resides in the nucleus. It carries out the reaction a 1,2-diacyl-sn-glycero-3-phosphocholine + H2O = a 1-acyl-sn-glycero-3-phosphocholine + a fatty acid + H(+). The enzyme catalyses a 1,2-diacyl-sn-glycero-3-phosphocholine + H2O = a 2-acyl-sn-glycero-3-phosphocholine + a fatty acid + H(+). The catalysed reaction is 1,2-dihexadecanoyl-sn-glycero-3-phosphocholine + H2O = 2-hexadecanoyl-sn-glycero-3-phosphocholine + hexadecanoate + H(+). It catalyses the reaction 1,2-dihexadecanoyl-sn-glycero-3-phosphocholine + H2O = 1-hexadecanoyl-sn-glycero-3-phosphocholine + hexadecanoate + H(+). It carries out the reaction 1-hexadecanoyl-2-(5Z,8Z,11Z,14Z-eicosatetraenoyl)-sn-glycero-3-phosphoethanolamine + H2O = 2-(5Z,8Z,11Z,14Z)-eicosatetraenoyl-sn-glycero-3-phosphoethanolamine + hexadecanoate + H(+). The enzyme catalyses 1-hexadecanoyl-2-(5Z,8Z,11Z,14Z-eicosatetraenoyl)-sn-glycero-3-phosphoethanolamine + H2O = 1-hexadecanoyl-sn-glycero-3-phosphoethanolamine + (5Z,8Z,11Z,14Z)-eicosatetraenoate + H(+). The catalysed reaction is 1,2-di-(9Z-octadecenoyl)-sn-glycero-3-phosphoethanolamine + 1,2-dihexadecanoyl-sn-glycero-3-phosphocholine = hexadecanoyl-sn-glycero-3-phosphocholine + N-hexadecanoyl-1,2-di-(9Z-octadecenoyl)-sn-glycero-3-phosphoethanolamine + H(+). It catalyses the reaction 1,2-dihexadecanoyl-sn-glycero-3-phosphocholine + a 2-acyl-sn-glycero-3-phosphocholine = a 1-hexadecanoyl-2-acyl-sn-glycero-3-phosphocholine + 2-hexadecanoyl-sn-glycero-3-phosphocholine. Its function is as follows. Exhibits both phospholipase A1/2 and acyltransferase activities. Shows phospholipase A1 (PLA1) and A2 (PLA2) activity, catalyzing the calcium-independent release of fatty acids from the sn-1 or sn-2 position of glycerophospholipids. Shows O-acyltransferase activity, catalyzing the transfer of a fatty acyl group from glycerophospholipid to the hydroxyl group of lysophospholipid. The chain is Phospholipase A and acyltransferase 1 from Rattus norvegicus (Rat).